Consider the following 1588-residue polypeptide: Pentafunctional AROM polypeptide (1588 aa).

Residues 1-392 (MVQLAKVPIL…YGDSAQFVSD (392 aa)) are 3-dehydroquinate synthase. Residues 43 to 45 (DTN), 78 to 81 (ETSK), 109 to 111 (GGV), and D114 contribute to the NAD(+) site. Position 125 (R125) interacts with 7-phospho-2-dehydro-3-deoxy-D-arabino-heptonate. An NAD(+)-binding site is contributed by 134–135 (TS). 7-phospho-2-dehydro-3-deoxy-D-arabino-heptonate is bound by residues D141 and K147. K156 contributes to the NAD(+) binding site. 7-phospho-2-dehydro-3-deoxy-D-arabino-heptonate is bound at residue N157. Residues 174–177 (WLET) and N185 contribute to the NAD(+) site. E189 is a binding site for Zn(2+). 7-phospho-2-dehydro-3-deoxy-D-arabino-heptonate contacts are provided by residues 189-192 (EVIK) and K258. Catalysis depends on E268, which acts as the Proton acceptor; for 3-dehydroquinate synthase activity. Residues 272-276 (RNLLN) and H279 each bind 7-phospho-2-dehydro-3-deoxy-D-arabino-heptonate. H279 serves as a coordination point for Zn(2+). Residue H283 is the Proton acceptor; for 3-dehydroquinate synthase activity of the active site. 7-phospho-2-dehydro-3-deoxy-D-arabino-heptonate is bound by residues H295 and K364. H295 is a binding site for Zn(2+). An EPSP synthase region spans residues 405-871 (VYPFKDIPAD…WDVLHSELGA (467 aa)). The active-site For EPSP synthase activity is C853. Residues 890–1080 (SVVIIGMRAA…IPSGRSAFVC (191 aa)) are shikimate kinase. 895–902 (GMRAAGKT) is an ATP binding site. The segment at 1081–1293 (LTFDDLTEQT…AAPGQLTVAQ (213 aa)) is 3-dehydroquinase. H1198 functions as the Proton acceptor; for 3-dehydroquinate dehydratase activity in the catalytic mechanism. The Schiff-base intermediate with substrate; for 3-dehydroquinate dehydratase activity role is filled by K1227. A shikimate dehydrogenase region spans residues 1306–1588 (PKELFVVGKP…KAIFDAVTKE (283 aa)).

The protein in the N-terminal section; belongs to the sugar phosphate cyclases superfamily. Dehydroquinate synthase family. It in the 2nd section; belongs to the EPSP synthase family. This sequence in the 3rd section; belongs to the shikimate kinase family. In the 4th section; belongs to the type-I 3-dehydroquinase family. The protein in the C-terminal section; belongs to the shikimate dehydrogenase family. Homodimer. It depends on Zn(2+) as a cofactor.

It is found in the cytoplasm. The enzyme catalyses 7-phospho-2-dehydro-3-deoxy-D-arabino-heptonate = 3-dehydroquinate + phosphate. The catalysed reaction is 3-dehydroquinate = 3-dehydroshikimate + H2O. It catalyses the reaction shikimate + NADP(+) = 3-dehydroshikimate + NADPH + H(+). It carries out the reaction shikimate + ATP = 3-phosphoshikimate + ADP + H(+). The enzyme catalyses 3-phosphoshikimate + phosphoenolpyruvate = 5-O-(1-carboxyvinyl)-3-phosphoshikimate + phosphate. Its pathway is metabolic intermediate biosynthesis; chorismate biosynthesis; chorismate from D-erythrose 4-phosphate and phosphoenolpyruvate: step 2/7. It functions in the pathway metabolic intermediate biosynthesis; chorismate biosynthesis; chorismate from D-erythrose 4-phosphate and phosphoenolpyruvate: step 3/7. The protein operates within metabolic intermediate biosynthesis; chorismate biosynthesis; chorismate from D-erythrose 4-phosphate and phosphoenolpyruvate: step 4/7. It participates in metabolic intermediate biosynthesis; chorismate biosynthesis; chorismate from D-erythrose 4-phosphate and phosphoenolpyruvate: step 5/7. Its pathway is metabolic intermediate biosynthesis; chorismate biosynthesis; chorismate from D-erythrose 4-phosphate and phosphoenolpyruvate: step 6/7. The AROM polypeptide catalyzes 5 consecutive enzymatic reactions in prechorismate polyaromatic amino acid biosynthesis. The polypeptide is Pentafunctional AROM polypeptide (Saccharomyces cerevisiae (strain ATCC 204508 / S288c) (Baker's yeast)).